The primary structure comprises 179 residues: 3-hydroxyanthranilate 3,4-dioxygenase (179 aa).

An O2-binding site is contributed by Arg-47. Residues His-51, Glu-57, and His-96 each contribute to the Fe cation site. Glu-57 lines the substrate pocket. Positions 100 and 110 each coordinate substrate. Residues Cys-125, Cys-128, Cys-162, and Cys-165 each contribute to the Fe cation site.

Belongs to the 3-HAO family. It depends on Fe(2+) as a cofactor.

It carries out the reaction 3-hydroxyanthranilate + O2 = (2Z,4Z)-2-amino-3-carboxymuconate 6-semialdehyde. Its pathway is cofactor biosynthesis; NAD(+) biosynthesis; quinolinate from L-kynurenine: step 3/3. In terms of biological role, catalyzes the oxidative ring opening of 3-hydroxyanthranilate to 2-amino-3-carboxymuconate semialdehyde, which spontaneously cyclizes to quinolinate. The polypeptide is 3-hydroxyanthranilate 3,4-dioxygenase (Bacillus thuringiensis (strain Al Hakam)).